We begin with the raw amino-acid sequence, 103 residues long: Small ribosomal subunit protein uS10 (103 aa).

The protein belongs to the universal ribosomal protein uS10 family. As to quaternary structure, part of the 30S ribosomal subunit.

Involved in the binding of tRNA to the ribosomes. This is Small ribosomal subunit protein uS10 from Neorickettsia sennetsu (strain ATCC VR-367 / Miyayama) (Ehrlichia sennetsu).